The sequence spans 77 residues: Ras-related C3 botulinum toxin substrate 1 (77 aa).

22–24 contributes to the GTP binding site; that stretch reads KLD. Lys-53 participates in a covalent cross-link: Glycyl lysine isopeptide (Lys-Gly) (interchain with G-Cter in ubiquitin). 65-66 contacts GTP; the sequence is AL.

Belongs to the small GTPase superfamily. Rho family. As to quaternary structure, interacts with NISCH. Interacts with PIP5K1A. Interacts with the GTP-bound form of RAB7A. Interacts with SRGAP2. Interacts with CYFIP1/SRA-1. Interacts with PLXNB3. Interacts with ARHGDIA; the interaction is induced by SEMA5A, mediated through PLXNB3 and inactivates and stabilizes RAC1. Interacts (GTP-bound form preferentially) with PKN2 (via the REM repeats); the interaction stimulates autophosphorylation and phosphorylation of PKN2. Interacts with the GEF proteins PREX1, RASGRF2, FARP1, FARP2, DOCK1, DOCK2 and DOCK7, which promote the exchange between GDP and GTP, and therefore activate it. Interacts with PARD6A, PARD6B and PARD6G in a GTP-dependent manner. Part of a quaternary complex containing PARD3, some PARD6 protein (PARD6A, PARD6B or PARD6G) and some atypical PKC protein (PRKCI or PRKCZ), which plays a central role in epithelial cell polarization. Found in a trimeric complex composed of DOCK1 and ELMO1, which plays a central role in phagocytosis of apoptotic cells. Interacts with RALBP1 via its effector domain. Interacts with PLXNB1. Part of a complex with MAP2K3, MAP3K3, CCM2 and DEF6. Interacts with BAIAP2, BAIAP2L1 and DEF6. Interacts with Y.pseudotuberculosis YPKA and PLCB2. Interacts with NOXA1. Interacts with ARHGEF2. Interacts with TBC1D2. Interacts with UNKL. Interacts with USP6. Interacts with SPATA13. Interacts with ARHGEF16; mediates activation of RAC1 by EPHA2. Interacts with ITGB4. Interacts with S100A8 and calprotectin (S100A8/9). Interacts with PACSIN2. Interacts (when active) with PPP5C (via TPR repeats); activates PPP5C phosphatase activity and translocates PPP5C to the cell membrane. Interacts with RAPH1 (via Ras associating and PH domains). Interacts with MTSS2 (via IMD domain); this interaction may be important to potentiate PDGF-induced RAC1 activation. Interacts with PAK2. Interacts (GTP-bound form) with SH3RF1 and SH3RF3. Found in a complex with SH3RF1, MAPK8IP1/JIP1, MAP3K11/MLK3, MAP2K7/MKK7 and MAPK8/JNK1. Interacts (both active GTP- or inactive GDP-bound forms) with SH3RF2. Interacts (GTP-bound form preferentially) with CYRIB. Interacts with DOCK4 (via DOCKER domain); functions as a guanine nucleotide exchange factor (GEF) for RAC1. Interacts with GARRE1. Interacts with RAP1GDS1. May interact with ARHGAP36. Interacts with DSG3; the interaction is required for DSG3 translocation to cell-cell junctions, organization of cortical F-actin bundles and actin anchoring at cell-cell junctions. Component of the phagocyte NADPH oxidase complex composed of an obligatory core heterodimer formed by the membrane proteins CYBA and CYBB and the cytosolic regulatory subunits NCF1/p47-phox, NCF2/p67-phox, NCF4/p40-phox and the small GTPase RAC1 or RAC2. Interacts with NCF2. In terms of processing, the N-terminus is blocked. Post-translationally, GTP-bound active form is ubiquitinated by HACE1, leading to its degradation by the proteasome.

Its subcellular location is the cytoplasm. The protein resides in the membrane. The protein localises to the melanosome. It is found in the cell projection. It localises to the lamellipodium. Its subcellular location is the dendrite. The protein resides in the synapse. The protein localises to the nucleus. The enzyme catalyses GTP + H2O = GDP + phosphate + H(+). Its activity is regulated as follows. Regulated by guanine nucleotide exchange factors (GEFs) which promote the exchange of bound GDP for free GTP, GTPase activating proteins (GAPs) which increase the GTP hydrolysis activity, and GDP dissociation inhibitors which inhibit the dissociation of the nucleotide from the GTPase. GTP hydrolysis is stimulated by ARHGAP30. Plasma membrane-associated small GTPase which cycles between active GTP-bound and inactive GDP-bound states. In its active state, binds to a variety of effector proteins to regulate cellular responses such as secretory processes, phagocytosis of apoptotic cells, epithelial cell polarization, neurons adhesion, migration and differentiation, and growth-factor induced formation of membrane ruffles. Rac1 p21/rho GDI heterodimer is the active component of the cytosolic factor sigma 1, which is involved in stimulation of the NADPH oxidase activity in macrophages. Essential for the SPATA13-mediated regulation of cell migration and adhesion assembly and disassembly. Stimulates PKN2 kinase activity. In concert with RAB7A, plays a role in regulating the formation of RBs (ruffled borders) in osteoclasts. In podocytes, promotes nuclear shuttling of NR3C2; this modulation is required for a proper kidney functioning. Required for atypical chemokine receptor ACKR2-induced LIMK1-PAK1-dependent phosphorylation of cofilin (CFL1) and for up-regulation of ACKR2 from endosomal compartment to cell membrane, increasing its efficiency in chemokine uptake and degradation. In neurons, is involved in dendritic spine formation and synaptic plasticity. In hippocampal neurons, involved in spine morphogenesis and synapse formation, through local activation at synapses by guanine nucleotide exchange factors (GEFs), such as ARHGEF6/ARHGEF7/PIX. In synapses, seems to mediate the regulation of F-actin cluster formation performed by SHANK3. In neurons, plays a crucial role in regulating GABA(A) receptor synaptic stability and hence GABAergic inhibitory synaptic transmission through its role in PAK1 activation and eventually F-actin stabilization. Required for DSG3 translocation to cell-cell junctions, DSG3-mediated organization of cortical F-actin bundles and anchoring of actin at cell junctions; via interaction with DSG3. Subunit of the phagocyte NADPH oxidase complex that mediates the transfer of electrons from cytosolic NADPH to O2 to produce the superoxide anion (O2(-)). The sequence is that of Ras-related C3 botulinum toxin substrate 1 from Cavia porcellus (Guinea pig).